The following is a 388-amino-acid chain: L-arabinitol 4-dehydrogenase (388 aa).

The Zn(2+) site is built by Cys-55, His-80, Glu-81, Cys-110, Cys-113, Cys-116, Cys-124, and Glu-165. Residues 192-193, Asp-213, Arg-218, Ile-293, and 317-319 each bind NAD(+); these read PI and QYR.

Belongs to the zinc-containing alcohol dehydrogenase family. In terms of assembly, homotetramer. It depends on Zn(2+) as a cofactor.

It carries out the reaction L-arabinitol + NAD(+) = L-xylulose + NADH + H(+). The protein operates within carbohydrate degradation; L-arabinose degradation via L-arabinitol; D-xylulose 5-phosphate from L-arabinose (fungal route): step 2/5. In terms of biological role, catalyzes the NAD-dependent oxidation of L-arabinitol to L-xylulose in the fungal L-arabinose catabolic pathway. L-arabinose catabolism is important for using plant material as a carbon source. NADP cannot act as a cosubstrate. In Talaromyces emersonii (Thermophilic fungus), this protein is L-arabinitol 4-dehydrogenase (lad).